The chain runs to 185 residues: dCTP deaminase (185 aa).

DCTP is bound by residues 107–112 (KSTYAR), 131–133 (TLE), glutamine 152, tyrosine 166, and glutamine 176. The active-site Proton donor/acceptor is glutamate 133.

This sequence belongs to the dCTP deaminase family. As to quaternary structure, homotrimer.

It carries out the reaction dCTP + H2O + H(+) = dUTP + NH4(+). Its pathway is pyrimidine metabolism; dUMP biosynthesis; dUMP from dCTP (dUTP route): step 1/2. Catalyzes the deamination of dCTP to dUTP. The protein is dCTP deaminase of Wolbachia pipientis wMel.